The chain runs to 346 residues: UPF0425 pyridoxal phosphate-dependent protein MK0620 (346 aa).

Lys-206 bears the N6-(pyridoxal phosphate)lysine mark.

Pyridoxal 5'-phosphate serves as cofactor.

This Methanopyrus kandleri (strain AV19 / DSM 6324 / JCM 9639 / NBRC 100938) protein is UPF0425 pyridoxal phosphate-dependent protein MK0620.